The sequence spans 121 residues: Large ribosomal subunit protein uL18 (121 aa).

It belongs to the universal ribosomal protein uL18 family. As to quaternary structure, part of the 50S ribosomal subunit; part of the 5S rRNA/L5/L18/L25 subcomplex. Contacts the 5S and 23S rRNAs.

Its function is as follows. This is one of the proteins that bind and probably mediate the attachment of the 5S RNA into the large ribosomal subunit, where it forms part of the central protuberance. The sequence is that of Large ribosomal subunit protein uL18 from Delftia acidovorans (strain DSM 14801 / SPH-1).